Reading from the N-terminus, the 90-residue chain is Acylphosphatase (90 aa).

The Acylphosphatase-like domain occupies 4–90 (CVRVRVSGRV…KGHDDFKIIY (87 aa)). Residues R19 and N37 contribute to the active site.

Belongs to the acylphosphatase family.

The catalysed reaction is an acyl phosphate + H2O = a carboxylate + phosphate + H(+). The protein is Acylphosphatase (acyP) of Methanothrix thermoacetophila (strain DSM 6194 / JCM 14653 / NBRC 101360 / PT) (Methanosaeta thermophila).